The following is an 814-amino-acid chain: Origin of replication complex subunit 1 (814 aa).

The segment covering 1–15 (MDLSATPSRSKSGLR) has biased composition (polar residues). A disordered region spans residues 1–127 (MDLSATPSRS…PKKPKKRAYY (127 aa)). Composition is skewed to low complexity over residues 51-62 (APMSPVTPSSVR) and 69-80 (ETPTKVTSETPV). The short motif at 105–112 (PKRQRQRQ) is the Nuclear localization signal element. The span at 108–127 (QRQRQRQRQQPKKPKKRAYY) shows a compositional bias: basic residues. The tract at residues 157-181 (DPEAEECRVCFRAGAAVMVECDVCL) is histone H3 binding. The PHD-type zinc finger occupies 160-209 (AEECRVCFRAGAAVMVECDVCLGGFHLRCVRPPLRRVPEGDWACPYCEAE). Zn(2+)-binding residues include Cys163, Cys166, Cys177, Cys180, His185, and Cys188. Positions 197-201 (PEGDW) are histone H3 binding. Residues Cys203 and Cys206 each contribute to the Zn(2+) site. The region spanning 218 to 335 (PKPPEGKRIV…IHWHNFKRLA (118 aa)) is the BAH domain. Residues 310–315 (ASDQGD) are histone H3 binding. 2 stretches are compositionally biased toward acidic residues: residues 339 to 349 (DEPETKEDPGD) and 360 to 373 (SDSDEDSEYDEEEE). Residues 339–384 (DEPETKEDPGDEPYNAGNDYVSDSDEDSEYDEEEEPTKCSSARTHQ) are disordered. Residues 433-804 (PKSLPCRDKE…DDVTFALKES (372 aa)) form a necessary and sufficient for ORC complex assembly region. ATP-binding positions include 468–475 (GVPGTGKT) and 468–476 (GVPGTGKTM). Positions 558 and 559 each coordinate Mg(2+). Residues Glu559, Asn592, and Arg657 each contribute to the ATP site.

Belongs to the ORC1 family. As to quaternary structure, component of the origin recognition complex (ORC) composed of at least ORC1, ORC2, ORC3, ORC4, ORC5 and ORC6. ORC is regulated in a cell-cycle and development dependent manner. It is sequentially assembled at the exit from anaphase of mitosis and disassembled as cells enter S phase. Binds unmodified and methylated histone H3. In terms of tissue distribution, expressed strongly in root tips and shoot apical meristem (SAM), and weakly in young leaves. Not detected in mature leaves.

It localises to the nucleus. Functionally, essential protein. Component of the origin recognition complex (ORC) that binds origins of replication. It has a role in both chromosomal replication and mating type transcriptional silencing. Binds to the ARS consensus sequence (ACS) of origins of replication. H3K4me3 effector that positively regulates the transcription of a subset of genes. Required for cell proliferation. The sequence is that of Origin of replication complex subunit 1 from Oryza sativa subsp. japonica (Rice).